Here is a 131-residue protein sequence, read N- to C-terminus: Profilin-7 (131 aa).

A disulfide bridge connects residues Cys13 and Cys115. The short motif at 81 to 97 (AVIRGKKGSGGITVKKT) is the Involved in PIP2 interaction element. At Thr111 the chain carries Phosphothreonine.

Belongs to the profilin family. As to quaternary structure, occurs in many kinds of cells as a complex with monomeric actin in a 1:1 ratio. Post-translationally, phosphorylated by MAP kinases.

Its subcellular location is the cytoplasm. The protein resides in the cytoskeleton. Functionally, binds to actin and affects the structure of the cytoskeleton. At high concentrations, profilin prevents the polymerization of actin, whereas it enhances it at low concentrations. This chain is Profilin-7, found in Zea mays (Maize).